Consider the following 59-residue polypeptide: Large ribosomal subunit protein bL32 (59 aa).

The protein belongs to the bacterial ribosomal protein bL32 family.

This Synechococcus sp. (strain RCC307) protein is Large ribosomal subunit protein bL32.